The following is a 163-amino-acid chain: Phosphopantetheine adenylyltransferase (163 aa).

Position 8 (S8) interacts with substrate. ATP contacts are provided by residues 8 to 9 (SF) and H16. Substrate is bound by residues K40, T72, and R86. ATP-binding positions include 87–89 (GLR), E97, and 122–128 (HSFLSSS).

Belongs to the bacterial CoaD family. As to quaternary structure, homohexamer. It depends on Mg(2+) as a cofactor.

It is found in the cytoplasm. The catalysed reaction is (R)-4'-phosphopantetheine + ATP + H(+) = 3'-dephospho-CoA + diphosphate. It functions in the pathway cofactor biosynthesis; coenzyme A biosynthesis; CoA from (R)-pantothenate: step 4/5. In terms of biological role, reversibly transfers an adenylyl group from ATP to 4'-phosphopantetheine, yielding dephospho-CoA (dPCoA) and pyrophosphate. The sequence is that of Phosphopantetheine adenylyltransferase from Synechococcus sp. (strain CC9902).